The following is a 509-amino-acid chain: 4-aminobutyrate aminotransferase (509 aa).

166-167 serves as a coordination point for pyridoxal 5'-phosphate; it reads GS. Arginine 223 contributes to the substrate binding site. Lysine 363 bears the N6-(pyridoxal phosphate)lysine mark. Threonine 387 lines the pyridoxal 5'-phosphate pocket.

It belongs to the class-III pyridoxal-phosphate-dependent aminotransferase family. As to quaternary structure, homodimer. Pyridoxal 5'-phosphate is required as a cofactor.

It localises to the cytoplasm. It catalyses the reaction 4-aminobutanoate + 2-oxoglutarate = succinate semialdehyde + L-glutamate. In terms of biological role, deaminates gamma-aminobutyric acid (GABA) to succinate-semialdehyde, which in turn is converted to succinate by the succinate semialdehyde dehydrogenase. Not required for the utilization of GABA as nitrogen source. The polypeptide is 4-aminobutyrate aminotransferase (GATA) (Mycosarcoma maydis (Corn smut fungus)).